The sequence spans 526 residues: Arylsulfatase G (526 aa).

The N-terminal stretch at 1–16 is a signal peptide; the sequence is MGWLFLKVLLVGMVFS. Residues D44, D45, and C84 each contribute to the Ca(2+) site. C84 (nucleophile) is an active-site residue. C84 bears the 3-oxoalanine (Cys) mark. N117 carries an N-linked (GlcNAc...) asparagine glycan. K137 provides a ligand contact to substrate. Residue H139 is part of the active site. Residue S162 coordinates substrate. A glycan (N-linked (GlcNAc...) asparagine) is linked at N215. H251 serves as a coordination point for substrate. Positions 302 and 303 each coordinate Ca(2+). N-linked (GlcNAc...) asparagine glycans are attached at residues N356 and N497.

The protein belongs to the sulfatase family. Ca(2+) is required as a cofactor. N-glycosylated with both high mannose and complex type sugars. In terms of processing, the conversion to 3-oxoalanine (also known as C-formylglycine, FGly), of a serine or cysteine residue in prokaryotes and of a cysteine residue in eukaryotes, is critical for catalytic activity. Post-translationally, 63-kDa precursor undergoes proteolytic processing in two steps, yielding two fragments in the first step (apparent molecular masses of 44 and 18 kDa). In the second step, the 44-kDa fragment is processed further to the 34- and 10-kDa chains. The 10-kDa chain is a cleavage product of the 44-kDa fragment but linked to the 18-kDa chain through a disulfide bridge.

It is found in the lysosome. It carries out the reaction an aryl sulfate + H2O = a phenol + sulfate + H(+). The enzyme catalyses Hydrolysis of the 3-sulfate groups of the N-sulfo-D-glucosamine 3-O-sulfate units of heparin.. In terms of biological role, displays arylsulfatase activity at acidic pH towards the artificial substrate p-nitrocatechol sulfate. Catalyzes the hydrolysis of the 3-sulfate groups of the N-sulfo-D-glucosamine 3-O-sulfate units of heparin. In Rattus norvegicus (Rat), this protein is Arylsulfatase G (Arsg).